A 321-amino-acid chain; its full sequence is Glucokinase (321 aa).

10–15 (GDIGGT) provides a ligand contact to ATP.

This sequence belongs to the bacterial glucokinase family.

Its subcellular location is the cytoplasm. It carries out the reaction D-glucose + ATP = D-glucose 6-phosphate + ADP + H(+). In Marinobacter nauticus (strain ATCC 700491 / DSM 11845 / VT8) (Marinobacter aquaeolei), this protein is Glucokinase.